The following is a 202-amino-acid chain: MDLLRHKKTAAGRGFLDDQFLIAMPGMKDDRFTRSVIYICAHSDEGAMGLIINQTQQMLFPDLLVQLGIMNEQEAIRLPAQARDFVVRNGGPVDRSRGFVLHSGDYRVESSLTVSDDICLTATVDILRAISSGRGPRHALMALGYSGWGAGQLETEIAENGWLTCPASPELLFDADIERKYDRILASIGIDLAHLSLAAGHA.

The protein belongs to the UPF0301 (AlgH) family.

This Mesorhizobium japonicum (strain LMG 29417 / CECT 9101 / MAFF 303099) (Mesorhizobium loti (strain MAFF 303099)) protein is UPF0301 protein mlr7511.